The following is a 63-amino-acid chain: Large ribosomal subunit protein uL29 (63 aa).

The protein belongs to the universal ribosomal protein uL29 family.

In Aggregatibacter actinomycetemcomitans (Actinobacillus actinomycetemcomitans), this protein is Large ribosomal subunit protein uL29 (rpmC).